The sequence spans 87 residues: Putative defensin-like protein 317 (87 aa).

The N-terminal stretch at 1–24 (MKSFLVAFLIVLVFFCVEMKIGNG) is a signal peptide. 3 disulfide bridges follow: C38–C71, C47–C80, and C56–C82.

The protein belongs to the DEFL family.

It localises to the secreted. This chain is Putative defensin-like protein 317, found in Arabidopsis thaliana (Mouse-ear cress).